Reading from the N-terminus, the 906-residue chain is Cadherin-2 (906 aa).

An N-terminal signal peptide occupies residues 1-25 (MCRIVGAPRTLLPLLAALLQASVDA). Positions 26–159 (SGEISLCKTG…HNGYLQRQKR (134 aa)) are excised as a propeptide. Residues Ser96 and Ser135 each carry the phosphoserine modification. Cadherin domains follow at residues 160–267 (DWVI…RPEF), 268–392 (LHQV…GEVP), 393–497 (ENRV…NPYF), 498–603 (APNP…DNAP), and 604–714 (QVLP…DVDR). Residues 160–724 (DWVIPPINLP…IVGAGLGTGA (565 aa)) lie on the Extracellular side of the membrane. Glu170 is a binding site for Ca(2+). N-linked (GlcNAc...) asparagine glycosylation is present at Asn190. Ca(2+)-binding residues include Asp226, Glu228, Asp259, Met260, Asn261, Asp262, and Asn263. Residue Asn273 is glycosylated (N-linked (GlcNAc...) asparagine). Positions 293, 295, and 301 each coordinate Ca(2+). N-linked (GlcNAc...) asparagine glycosylation occurs at Asn325. Position 353 (Asp353) interacts with Ca(2+). 6 N-linked (GlcNAc...) asparagine glycosylation sites follow: Asn357, Asn402, Asn572, Asn622, Asn651, and Asn692. The chain crosses the membrane as a helical span at residues 725–746 (IIAILLCIIILLILVLMFVVWM). Residues 747–906 (KRRDKERQAK…LADMYGGGDD (160 aa)) lie on the Cytoplasmic side of the membrane. Residues 863-880 (SGSTAGSLSSLNSSSSGG) show a composition bias toward low complexity. Residues 863 to 884 (SGSTAGSLSSLNSSSSGGEQDY) form a disordered region.

As to quaternary structure, homodimer (via extracellular region). Can also form heterodimers with other cadherins (via extracellular region). Dimerization occurs in trans, i.e. with a cadherin chain from another cell. Interacts with CDCP1. Interacts with PCDH8; this complex may also include TAOK2. The interaction with PCDH8 may lead to internalization through TAOK2/p38 MAPK pathway. Identified in a complex containing FGFR4, NCAM1, CDH2, PLCG1, FRS2, SRC, SHC1, GAP43 and CTTN. May interact with OBSCN (via protein kinase domain 2). Interacts with FBXO45. Post-translationally, cleaved by MMP24. Ectodomain cleavage leads to the generation of a soluble 90 kDa N-terminal soluble fragment and a 45 kDa membrane-bound C-terminal fragment 1 (CTF1), which is further cleaved by gamma-secretase into a 35 kDa. Cleavage in neural stem cells by MMP24 affects CDH2-mediated anchorage of neural stem cells to ependymocytes in the adult subependymal zone, leading to modulate neural stem cell quiescence. In terms of processing, may be phosphorylated by OBSCN. In terms of tissue distribution, detected in liver, kidney, heart and brain capillaries.

Its subcellular location is the cell membrane. The protein resides in the sarcolemma. It is found in the cell junction. The protein localises to the cell surface. It localises to the desmosome. Its subcellular location is the adherens junction. Its function is as follows. Calcium-dependent cell adhesion protein; preferentially mediates homotypic cell-cell adhesion by dimerization with a CDH2 chain from another cell. Cadherins may thus contribute to the sorting of heterogeneous cell types. Acts as a regulator of neural stem cells quiescence by mediating anchorage of neural stem cells to ependymocytes in the adult subependymal zone: upon cleavage by MMP24, CDH2-mediated anchorage is affected, leading to modulate neural stem cell quiescence. Plays a role in cell-to-cell junction formation between pancreatic beta cells and neural crest stem (NCS) cells, promoting the formation of processes by NCS cells. Required for proper neurite branching. Required for pre- and postsynaptic organization. CDH2 may be involved in neuronal recognition mechanism. In hippocampal neurons, may regulate dendritic spine density. This chain is Cadherin-2 (CDH2), found in Bos taurus (Bovine).